The sequence spans 178 residues: Large ribosomal subunit protein uL6 (178 aa).

This sequence belongs to the universal ribosomal protein uL6 family. In terms of assembly, part of the 50S ribosomal subunit.

This protein binds to the 23S rRNA, and is important in its secondary structure. It is located near the subunit interface in the base of the L7/L12 stalk, and near the tRNA binding site of the peptidyltransferase center. The chain is Large ribosomal subunit protein uL6 from Streptococcus pneumoniae (strain 70585).